We begin with the raw amino-acid sequence, 126 residues long: CD59 glycoprotein (126 aa).

Residues 1 to 22 form the signal peptide; it reads MRARRGFILLLLLAVLCSTGVS. One can recognise a UPAR/Ly6 domain in the interval 23–110; it reads LRCYNCLDPV…NGAISLLGKT (88 aa). Disulfide bonds link cysteine 25–cysteine 48, cysteine 28–cysteine 35, cysteine 41–cysteine 61, cysteine 67–cysteine 85, and cysteine 86–cysteine 91. An N-linked (GlcNAc...) asparagine glycan is attached at asparagine 38. Residue asparagine 101 is the site of GPI-anchor amidated asparagine attachment. A propeptide spans 102-126 (removed in mature form); that stretch reads GAISLLGKTALLVTSVLAAILKPCF.

In terms of assembly, interacts with T-cell surface antigen CD2. N- and O-glycosylated.

The protein localises to the cell membrane. Its subcellular location is the secreted. Potent inhibitor of the complement membrane attack complex (MAC) action, which protects self-cells from damage during complement activation. Acts by binding to the beta-haipins of C8 (C8A and C8B) components of the assembling MAC, forming an intermolecular beta-sheet that prevents incorporation of the multiple copies of C9 required for complete formation of the osmolytic pore. The protein is CD59 glycoprotein of Rattus norvegicus (Rat).